We begin with the raw amino-acid sequence, 283 residues long: uncharacterized protein (283 aa).

It belongs to the glycosyltransferase 2 family. WaaE/KdtX subfamily.

This is an uncharacterized protein from Rickettsia felis (strain ATCC VR-1525 / URRWXCal2) (Rickettsia azadi).